The following is a 246-amino-acid chain: Small ribosomal subunit protein uS2 (246 aa).

The disordered stretch occupies residues 224–246 (AKQGEEEAEAAEETAPETETTTA). Over residues 229–239 (EEAEAAEETAP) the composition is skewed to acidic residues.

The protein belongs to the universal ribosomal protein uS2 family.

The chain is Small ribosomal subunit protein uS2 from Bacillus velezensis (strain DSM 23117 / BGSC 10A6 / LMG 26770 / FZB42) (Bacillus amyloliquefaciens subsp. plantarum).